We begin with the raw amino-acid sequence, 118 residues long: MISKPDKNKLRQKRHRRVRGKLSGTADRPRLNIFRSNTGIYAQVIDDVAGVTLASASTLDKEVSKGTKTEQAIVVGKLVAERAVAKGISEVVFDRGGYLYHGRVKALADSARENGLKF.

Residues 1-22 form a disordered region; sequence MISKPDKNKLRQKRHRRVRGKL. Positions 10-20 are enriched in basic residues; that stretch reads LRQKRHRRVRG.

The protein belongs to the universal ribosomal protein uL18 family. In terms of assembly, part of the 50S ribosomal subunit; part of the 5S rRNA/L5/L18/L25 subcomplex. Contacts the 5S and 23S rRNAs.

Its function is as follows. This is one of the proteins that bind and probably mediate the attachment of the 5S RNA into the large ribosomal subunit, where it forms part of the central protuberance. The protein is Large ribosomal subunit protein uL18 of Streptococcus thermophilus (strain ATCC BAA-491 / LMD-9).